Here is a 338-residue protein sequence, read N- to C-terminus: Ferrochelatase (338 aa).

Histidine 189 and glutamate 294 together coordinate Fe cation.

The protein belongs to the ferrochelatase family.

It is found in the cytoplasm. The catalysed reaction is heme b + 2 H(+) = protoporphyrin IX + Fe(2+). The protein operates within porphyrin-containing compound metabolism; protoheme biosynthesis; protoheme from protoporphyrin-IX: step 1/1. In terms of biological role, catalyzes the ferrous insertion into protoporphyrin IX. This Pseudomonas putida (strain ATCC 700007 / DSM 6899 / JCM 31910 / BCRC 17059 / LMG 24140 / F1) protein is Ferrochelatase.